A 590-amino-acid chain; its full sequence is DELLA protein GAI1 (590 aa).

The span at methionine 1 to histidine 10 shows a compositional bias: basic residues. A disordered region spans residues methionine 1–proline 28. Positions aspartate 35 to alanine 39 match the DELLA motif motif. Residues histidine 153–alanine 182 are disordered. The region spanning valine 205–glutamine 575 is the GRAS domain. The tract at residues isoleucine 212–isoleucine 266 is leucine repeat I (LRI). The segment at glutamine 284 to glycine 349 is VHIID. The VHIID signature appears at valine 315 to aspartate 319. Positions glutamate 363–serine 395 are leucine repeat II (LRII). The interval valine 405 to asparagine 496 is PFYRE. An LXXLL motif motif is present at residues leucine 413–leucine 417. An SAW region spans residues alanine 499–glutamine 575.

This sequence belongs to the GRAS family. DELLA subfamily. In terms of processing, phosphorylated. Post-translationally, ubiquitinated. Upon GA application it is ubiquitinated, leading to its subsequent degradation.

Its subcellular location is the nucleus. Probable transcriptional regulator that acts as a repressor of the gibberellin (GA) signaling pathway. Probably acts by participating in large multiprotein complexes that repress transcription of GA-inducible genes. Upon GA application, it is degraded by the proteasome, allowing the GA signaling pathway. This chain is DELLA protein GAI1 (GAI1), found in Vitis vinifera (Grape).